The chain runs to 246 residues: tRNA (guanine-N(1)-)-methyltransferase (246 aa).

Residues Gly113 and 133-138 (IGDYVL) each bind S-adenosyl-L-methionine.

It belongs to the RNA methyltransferase TrmD family. In terms of assembly, homodimer.

The protein resides in the cytoplasm. The enzyme catalyses guanosine(37) in tRNA + S-adenosyl-L-methionine = N(1)-methylguanosine(37) in tRNA + S-adenosyl-L-homocysteine + H(+). Its function is as follows. Specifically methylates guanosine-37 in various tRNAs. This is tRNA (guanine-N(1)-)-methyltransferase from Haemophilus influenzae (strain PittEE).